A 655-amino-acid polypeptide reads, in one-letter code: NADH-ubiquinone oxidoreductase chain 5 (655 aa).

The next 16 helical transmembrane spans lie at 3–23 (NAIS…LFFG), 34–54 (MTST…YQLL), 84–104 (LTIT…IYSI), 116–136 (FFSL…GSNY), 137–157 (FVLF…ISFW), 180–200 (FFVL…YSTI), 204–224 (AYLI…IAAM), 244–264 (TPVS…YLLL), 276–296 (VLFI…LIAI), 304–322 (IIAL…AIGL), 332–354 (LLGH…HSIL), 370–390 (LPYT…MPGL), 413–433 (VVYW…MKIL), 456–476 (IYIT…GWIL), 516–536 (ISAI…AIVF), and 629–649 (LLLV…LISI).

The protein belongs to the complex I subunit 5 family. Complex I is composed of 37 different subunits.

The protein resides in the mitochondrion inner membrane. It carries out the reaction a ubiquinone + NADH + 5 H(+)(in) = a ubiquinol + NAD(+) + 4 H(+)(out). Functionally, core subunit of the mitochondrial membrane respiratory chain NADH dehydrogenase (Complex I) that is believed to belong to the minimal assembly required for catalysis. Complex I functions in the transfer of electrons from NADH to the respiratory chain. The immediate electron acceptor for the enzyme is believed to be ubiquinone. This Yarrowia lipolytica (strain CLIB 122 / E 150) (Yeast) protein is NADH-ubiquinone oxidoreductase chain 5 (ND5).